The primary structure comprises 126 residues: Calcitonin receptor-stimulating peptide 1 (126 aa).

The first 25 residues, 1–25 (MGFWKFPPFLVLSILVLYQAGMFHT), serve as a signal peptide directing secretion. A propeptide spanning residues 26–78 (APMRSAFGSPFDPATLSEEESRLLLAAMVNDYEQMKAREMQKQRAQGSGISVQ) is cleaved from the precursor. The cysteines at positions 82 and 87 are disulfide-linked. Glycine 118 carries the post-translational modification Glycine amide. The propeptide occupies 123–126 (NFWI).

As to expression, mainly expressed in the thyroid gland and CNS. Found in the nerve cells of cerebrum, hippocampus, hypothalamus, pons/midbrain and thalamus.

The protein resides in the secreted. Stimulates cAMP production in porcine kidney cell line LLC-PK1 via the calcitonin receptor (CT) but not via the CT-like (CL) receptor. This chain is Calcitonin receptor-stimulating peptide 1 (CRSP1), found in Sus scrofa (Pig).